The sequence spans 138 residues: Transcription antitermination protein NusB (138 aa).

This sequence belongs to the NusB family.

Its function is as follows. Involved in transcription antitermination. Required for transcription of ribosomal RNA (rRNA) genes. Binds specifically to the boxA antiterminator sequence of the ribosomal RNA (rrn) operons. This Helicobacter pylori (strain Shi470) protein is Transcription antitermination protein NusB.